The sequence spans 729 residues: Fatty acid oxidation complex subunit alpha (729 aa).

Residues 1–189 (MLYKGDTLYL…KIGLVDGVVK (189 aa)) form an enoyl-CoA hydratase/isomerase region. D296 contacts substrate. The segment at 311-729 (ETPKQAAVLG…ARPVGSLKTA (419 aa)) is 3-hydroxyacyl-CoA dehydrogenase. NAD(+)-binding positions include M324, D343, 400 to 402 (VVE), K407, and S429. The active-site For 3-hydroxyacyl-CoA dehydrogenase activity is H450. N453 contacts NAD(+). Residues N500 and Y660 each coordinate substrate. The tract at residues 708–729 (RHNEPYYPPVEPARPVGSLKTA) is disordered.

The protein in the N-terminal section; belongs to the enoyl-CoA hydratase/isomerase family. This sequence in the C-terminal section; belongs to the 3-hydroxyacyl-CoA dehydrogenase family. Heterotetramer of two alpha chains (FadB) and two beta chains (FadA).

It carries out the reaction a (3S)-3-hydroxyacyl-CoA + NAD(+) = a 3-oxoacyl-CoA + NADH + H(+). The enzyme catalyses a (3S)-3-hydroxyacyl-CoA = a (2E)-enoyl-CoA + H2O. The catalysed reaction is a 4-saturated-(3S)-3-hydroxyacyl-CoA = a (3E)-enoyl-CoA + H2O. It catalyses the reaction (3S)-3-hydroxybutanoyl-CoA = (3R)-3-hydroxybutanoyl-CoA. It carries out the reaction a (3Z)-enoyl-CoA = a 4-saturated (2E)-enoyl-CoA. The enzyme catalyses a (3E)-enoyl-CoA = a 4-saturated (2E)-enoyl-CoA. It functions in the pathway lipid metabolism; fatty acid beta-oxidation. Functionally, involved in the aerobic and anaerobic degradation of long-chain fatty acids via beta-oxidation cycle. Catalyzes the formation of 3-oxoacyl-CoA from enoyl-CoA via L-3-hydroxyacyl-CoA. It can also use D-3-hydroxyacyl-CoA and cis-3-enoyl-CoA as substrate. The chain is Fatty acid oxidation complex subunit alpha from Salmonella agona (strain SL483).